A 356-amino-acid chain; its full sequence is Histidinol-phosphate aminotransferase 1 (356 aa).

Lys-213 is subject to N6-(pyridoxal phosphate)lysine.

The protein belongs to the class-II pyridoxal-phosphate-dependent aminotransferase family. Histidinol-phosphate aminotransferase subfamily. Homodimer. Pyridoxal 5'-phosphate serves as cofactor.

It carries out the reaction L-histidinol phosphate + 2-oxoglutarate = 3-(imidazol-4-yl)-2-oxopropyl phosphate + L-glutamate. It participates in amino-acid biosynthesis; L-histidine biosynthesis; L-histidine from 5-phospho-alpha-D-ribose 1-diphosphate: step 7/9. The chain is Histidinol-phosphate aminotransferase 1 from Burkholderia pseudomallei (strain K96243).